A 366-amino-acid chain; its full sequence is Isocitrate dehydrogenase [NAD] subunit alpha, mitochondrial (366 aa).

A mitochondrion-targeting transit peptide spans 1–27 (MAGPAWISKVSRLLGAFHNQKQVTRGF). Position 77 is an N6-succinyllysine (lysine 77). Phosphothreonine is present on threonine 101. Substrate is bound by residues arginine 115, arginine 125, and arginine 146. Lysine 223 is modified (N6-acetyllysine). Mg(2+) is bound by residues aspartate 233, aspartate 257, and aspartate 261. Lysine 343 bears the N6-acetyllysine; alternate mark. Lysine 343 carries the N6-succinyllysine; alternate modification. The residue at position 350 (lysine 350) is an N6-succinyllysine.

The protein belongs to the isocitrate and isopropylmalate dehydrogenases family. Heterooligomer of subunits alpha (IDH3A), beta (IDH3B), and gamma (IDH3G) in the apparent ratio of 2:1:1. The heterodimer containing one IDH3A and one IDH3B subunit and the heterodimer containing one IDH3A and one IDH3G subunit assemble into a heterotetramer (which contains two subunits of IDH3A, one of IDH3B and one of IDH3G) and further into the heterooctamer. The cofactor is Mg(2+). It depends on Mn(2+) as a cofactor.

It is found in the mitochondrion. The enzyme catalyses D-threo-isocitrate + NAD(+) = 2-oxoglutarate + CO2 + NADH. With respect to regulation, the heterotetramer and the heterodimer composed of IDH3A and IDH3G subunits can be allosterically activated by citrate (CIT) or/and ADP, and the two activators can act independently or synergistically. The heterodimer composed of IDH3A and IDH3B subunits cannot be allosterically regulated and the allosteric regulation of the heterotetramer is through the IDH3G subunit and not the IDH3B subunit. The IDH3G subunit contains the allosteric site which consists of a CIT-binding site and an ADP-binding site, and the binding of CIT and ADP causes conformational changes at the allosteric site which are transmitted to the active site in the catalytic subunit (IDH3A) through a cascade of conformational changes at the heterodimer interface, leading to stabilization of the isocitrate-binding at the active site and thus activation of the enzyme. ATP can activate the heterotetramer and the heterodimer composed of IDH3A and IDH3G subunits at low concentrations but inhibits their activities at high concentrations, whereas ATP exhibits only inhibitory effect on the heterodimer composed of IDH3A and IDH3B subunits. Its function is as follows. Catalytic subunit of the enzyme which catalyzes the decarboxylation of isocitrate (ICT) into alpha-ketoglutarate. The heterodimer composed of the alpha (IDH3A) and beta (IDH3B) subunits and the heterodimer composed of the alpha (IDH3A) and gamma (IDH3G) subunits, have considerable basal activity but the full activity of the heterotetramer (containing two subunits of IDH3A, one of IDH3B and one of IDH3G) requires the assembly and cooperative function of both heterodimers. In Bos taurus (Bovine), this protein is Isocitrate dehydrogenase [NAD] subunit alpha, mitochondrial.